We begin with the raw amino-acid sequence, 227 residues long: Germin-like protein 3-5 (227 aa).

The first 29 residues, 1–29 (MEYGFKAAGLVFVVLLLQQAPVLIRATDA), serve as a signal peptide directing secretion. An intrachain disulfide couples Cys-36 to Cys-51. The 153-residue stretch at 65–217 (SKIATGGDVN…ALRVDAGVVE (153 aa)) folds into the Cupin type-1 domain. N-linked (GlcNAc...) asparagine glycosylation is found at Asn-78 and Asn-81. His-114, His-116, Glu-121, and His-163 together coordinate Mn(2+).

This sequence belongs to the germin family. In terms of assembly, oligomer (believed to be a pentamer but probably hexamer).

The protein localises to the secreted. The protein resides in the extracellular space. It is found in the apoplast. Functionally, may play a role in plant defense. Probably has no oxalate oxidase activity even if the active site is conserved. The chain is Germin-like protein 3-5 from Oryza sativa subsp. japonica (Rice).